Reading from the N-terminus, the 484-residue chain is Putative cysteine ligase BshC (484 aa).

Residues 372–435 (RAFRDRVEGL…AARDEVLARH (64 aa)) are a coiled coil.

It belongs to the BshC family.

In Thermus thermophilus (strain ATCC BAA-163 / DSM 7039 / HB27), this protein is Putative cysteine ligase BshC.